We begin with the raw amino-acid sequence, 201 residues long: Large ribosomal subunit protein uL4 (201 aa).

The disordered stretch occupies residues T43–G66.

Belongs to the universal ribosomal protein uL4 family. As to quaternary structure, part of the 50S ribosomal subunit.

Its function is as follows. One of the primary rRNA binding proteins, this protein initially binds near the 5'-end of the 23S rRNA. It is important during the early stages of 50S assembly. It makes multiple contacts with different domains of the 23S rRNA in the assembled 50S subunit and ribosome. In terms of biological role, forms part of the polypeptide exit tunnel. The chain is Large ribosomal subunit protein uL4 from Tolumonas auensis (strain DSM 9187 / NBRC 110442 / TA 4).